A 407-amino-acid polypeptide reads, in one-letter code: Arginine deiminase (407 aa).

Cysteine 397 (amidino-cysteine intermediate) is an active-site residue.

Belongs to the arginine deiminase family.

Its subcellular location is the cytoplasm. It carries out the reaction L-arginine + H2O = L-citrulline + NH4(+). Its pathway is amino-acid degradation; L-arginine degradation via ADI pathway; carbamoyl phosphate from L-arginine: step 1/2. The polypeptide is Arginine deiminase (Pediococcus pentosaceus (strain ATCC 25745 / CCUG 21536 / LMG 10740 / 183-1w)).